The following is an 882-amino-acid chain: Putative HTH-type transcriptional regulator Mb0914c (882 aa).

The HTH luxR-type domain maps to 814–879; it reads PARGWGSLTP…QLVDEAARRG (66 aa). A DNA-binding region (H-T-H motif) is located at residues 838–857; the sequence is NKDIAKRLFVSPRTVQTHLT.

The chain is Putative HTH-type transcriptional regulator Mb0914c from Mycobacterium bovis (strain ATCC BAA-935 / AF2122/97).